Consider the following 340-residue polypeptide: Protein-arginine kinase (340 aa).

The Phosphagen kinase C-terminal domain occupies 21–242 (VVLSSRIRLA…EQIIMQERIA (222 aa)). ATP-binding positions include 24-28 (SSRIR), His79, Arg113, 164-168 (RASVM), and 195-200 (RGIYGE).

The protein belongs to the ATP:guanido phosphotransferase family.

The enzyme catalyses L-arginyl-[protein] + ATP = N(omega)-phospho-L-arginyl-[protein] + ADP + H(+). Functionally, catalyzes the specific phosphorylation of arginine residues in proteins. The chain is Protein-arginine kinase from Listeria monocytogenes serotype 4a (strain HCC23).